The following is a 568-amino-acid chain: Putative F-box protein At5g39480 (568 aa).

One can recognise an F-box domain in the interval 9–55 (ACLLLTLPEDVFAVISRFLSPSDICNLILCGKSLPALVDTEKMWLVQ). The segment at 315 to 337 (TNVLGESSSSKNTTPSQSEIRVS) is disordered. The segment covering 321–332 (SSSSKNTTPSQS) has biased composition (low complexity).

This chain is Putative F-box protein At5g39480, found in Arabidopsis thaliana (Mouse-ear cress).